The chain runs to 64 residues: Large ribosomal subunit protein bL33 (64 aa).

The protein belongs to the bacterial ribosomal protein bL33 family.

The protein is Large ribosomal subunit protein bL33 of Thermosynechococcus vestitus (strain NIES-2133 / IAM M-273 / BP-1).